Consider the following 136-residue polypeptide: Nuclear receptor 2C2-associated protein (136 aa).

It belongs to the NR2C2AP family.

The protein resides in the nucleus. May act as a repressor of nr2c2-mediated transactivation by suppressing the binding between nr2c2 and its response element in target genes. The chain is Nuclear receptor 2C2-associated protein (nr2c2ap) from Xenopus tropicalis (Western clawed frog).